The sequence spans 459 residues: Putative flavin-containing monooxygenase 2 (459 aa).

FAD-binding positions include 17-21, Glu38, and 46-47; these read GAGVS and VW. 217 to 220 contacts NADP(+); sequence SAID.

It belongs to the FMO family. FAD serves as cofactor.

This Arabidopsis thaliana (Mouse-ear cress) protein is Putative flavin-containing monooxygenase 2 (FMO2).